Reading from the N-terminus, the 229-residue chain is uncharacterized protein (229 aa).

Residues 2 to 69 (QRLAKLISNA…KSRLWIYYKP (68 aa)) form the S4 RNA-binding domain. The active-site Nucleophile is Asp102.

This sequence belongs to the pseudouridine synthase RsuA family.

It carries out the reaction a uridine in RNA = a pseudouridine in RNA. This is an uncharacterized protein from Rickettsia bellii (strain RML369-C).